A 1203-amino-acid polypeptide reads, in one-letter code: Kinesin-like protein KIN-14Q (1203 aa).

Residues 1–28 (MEDCCDPLLATDASPRPESFSRSEKDIA) form a disordered region. A compositionally biased stretch (basic and acidic residues) spans 19–28 (SFSRSEKDIA). A coiled-coil region spans residues 336–395 (ENLVCRAEEEAEGMRSDCEQQRKEMEDMKRMVEELKLENQQKTRECEEALNSLSEIQNEL). The 327-residue stretch at 499 to 825 (NIRVFCRCRP…LNFASRVRGI (327 aa)) folds into the Kinesin motor domain. Residue 582 to 589 (GQTGTGKT) coordinates ATP. The stretch at 846 to 901 (VEKWKQDMKGKDEQIRKMEETMYGLEAKIKERDTKNKTLQDKVKELESQLLVERKL) forms a coiled coil. The disordered stretch occupies residues 907–931 (DTKIAEQQTKQQTEDENNTSKRPPL).

The protein belongs to the TRAFAC class myosin-kinesin ATPase superfamily. Kinesin family. KIN-14 subfamily.

This Arabidopsis thaliana (Mouse-ear cress) protein is Kinesin-like protein KIN-14Q.